The primary structure comprises 278 residues: Formamidopyrimidine-DNA glycosylase (278 aa).

Residue proline 2 is the Schiff-base intermediate with DNA of the active site. Glutamate 3 acts as the Proton donor in catalysis. Residue lysine 57 is the Proton donor; for beta-elimination activity of the active site. The DNA site is built by histidine 90, arginine 109, and lysine 150. The FPG-type zinc finger occupies 235 to 269; sequence QVYGRAGEPCRQCGHPIEIAKHGQRSTFFCRHCQF. Arginine 259 serves as the catalytic Proton donor; for delta-elimination activity.

The protein belongs to the FPG family. In terms of assembly, monomer. Requires Zn(2+) as cofactor.

The catalysed reaction is Hydrolysis of DNA containing ring-opened 7-methylguanine residues, releasing 2,6-diamino-4-hydroxy-5-(N-methyl)formamidopyrimidine.. It carries out the reaction 2'-deoxyribonucleotide-(2'-deoxyribose 5'-phosphate)-2'-deoxyribonucleotide-DNA = a 3'-end 2'-deoxyribonucleotide-(2,3-dehydro-2,3-deoxyribose 5'-phosphate)-DNA + a 5'-end 5'-phospho-2'-deoxyribonucleoside-DNA + H(+). Involved in base excision repair of DNA damaged by oxidation or by mutagenic agents. Acts as a DNA glycosylase that recognizes and removes damaged bases. Has a preference for oxidized purines, such as 7,8-dihydro-8-oxoguanine (8-oxoG). Has AP (apurinic/apyrimidinic) lyase activity and introduces nicks in the DNA strand. Cleaves the DNA backbone by beta-delta elimination to generate a single-strand break at the site of the removed base with both 3'- and 5'-phosphates. This Yersinia pestis (strain Pestoides F) protein is Formamidopyrimidine-DNA glycosylase.